The primary structure comprises 239 residues: Protein UL20 homolog (239 aa).

The next 3 helical transmembrane spans lie at 65-81, 140-156, and 189-208; these read PSFS…ALVI, FVIG…FMVV, and LMPL…STAV.

Belongs to the alphaherpesvirinae UL20 family. As to quaternary structure, interacts with gK (via N-terminus); this interaction plays a role in the coordinate transport of UL20 and gK to the trans-Golgi network (TGN), and is required for their cell surface expression. Interacts with gB.

Its subcellular location is the virion. The protein localises to the host cell membrane. The protein resides in the host endosome membrane. It localises to the host Golgi apparatus membrane. It is found in the host nucleus membrane. Its function is as follows. Plays an essential role in egress of virus particles from the nucleus, cytoplasmic envelopment and virus-induced cell fusion. Forms a functional protein complex with gK and this interaction is absolutely essential for their coordinate intracellular transport, gK glycosylation, expression on host cell surface, and function. Together, they modulate gB-mediated virus-induced cell fusion and virion egress and therefore actively participate in these processes. The protein is Protein UL20 homolog of Equus caballus (Horse).